Consider the following 142-residue polypeptide: MRKWEHYEHTADIGVRGYGSTLEEAFEAVALGLFDVMVNVKKVEPKECREVEVEEEDLEALLYSFLEELLVLHDMEGLVFGDVKVRIEKTENGYKLKAKACGEVLNPEKHEPKEEVKAITYHDMKIEKLPDGRWMAQFVPDL.

Ca(2+)-binding residues include Asp-12 and Asp-141.

Belongs to the archease family.

In terms of biological role, activates the tRNA-splicing ligase complex by facilitating the enzymatic turnover of catalytic subunit RtcB. Acts by promoting the guanylylation of RtcB, a key intermediate step in tRNA ligation. Can also alter the NTP specificity of RtcB such that ATP, dGTP or ITP is used efficiently. In Thermococcus kodakarensis (strain ATCC BAA-918 / JCM 12380 / KOD1) (Pyrococcus kodakaraensis (strain KOD1)), this protein is Protein archease.